The chain runs to 185 residues: Meiotic expression up-regulated protein 31 (185 aa).

This Schizosaccharomyces pombe (strain 972 / ATCC 24843) (Fission yeast) protein is Meiotic expression up-regulated protein 31 (meu31).